A 1134-amino-acid chain; its full sequence is Ankyrin repeat and SAM domain-containing protein 1A (1134 aa).

Position 2 is an N-acetylglycine (glycine 2). Gly residues predominate over residues 33–55; that stretch reads GGGGGGGSGGGGGGSGGGGGGLG. The segment at 33–57 is disordered; the sequence is GGGGGGGSGGGGGGSGGGGGGLGSS. 6 ANK repeats span residues 79–108, 112–141, 148–177, 181–210, 214–243, and 246–275; these read TGYT…LTNV, KGCY…SHTR, DNET…DPTM, KFET…NLLS, KKHT…DSNY, and EMGS…DVNI. A compositionally biased stretch (basic and acidic residues) spans 305–317; that stretch reads HMTGKRSTKEVDK. 3 disordered regions span residues 305–338, 375–422, and 469–498; these read HMTG…KSQG, SMAS…EEDH, and VDGK…VPEQ. The residue at position 318 (threonine 318) is a Phosphothreonine. The span at 328 to 337 shows a compositional bias: polar residues; the sequence is SMDSISQKSQ. Positions 382–392 are enriched in basic and acidic residues; that stretch reads SDQDSTNKEAE. Serine 507 is subject to Phosphoserine. Residues 569–650 form a disordered region; sequence LTGLPTTNSR…MGSRSESLSN (82 aa). The span at 572–588 shows a compositional bias: polar residues; the sequence is LPTTNSRSHPETLTHTA. A compositionally biased stretch (basic and acidic residues) spans 613–628; the sequence is PKAELKLSRSLSKSDS. Residues serine 620, serine 622, serine 624, serine 626, serine 628, serine 647, serine 661, serine 663, serine 666, and serine 677 each carry the phosphoserine modification. The span at 633–650 shows a compositional bias: polar residues; sequence CSPTEDATMGSRSESLSN. 2 consecutive SAM domains span residues 696-762 and 770-837; these read TLEQ…LPKV and NSPP…YEEP. Residues 856–868 show a composition bias toward polar residues; it reads TSSPLSQNDSCTG. 2 disordered regions span residues 856 to 896 and 1079 to 1134; these read TSSP…APSR and AEMI…LSTN. A Phosphoserine modification is found at serine 887. One can recognise a PID domain in the interval 936–1091; that stretch reads IFESCGYEAN…IETKSSKPVP (156 aa). Residues 1123 to 1134 show a composition bias toward basic and acidic residues; sequence PKPDSKRSLSTN.

As to quaternary structure, interacts (via SAM domain) with EPHA2 (via SAM domain). Interacts with EPHA8; EPHA8 kinase activity-independent but stimulated by EPHA8 ubiquitination. Interacts (via SAM domain) with EPHA6 (via SAM domain). Post-translationally, phosphorylated on tyrosine residues in response to EGF and PDGF. Widely expressed (at protein level).

It localises to the cytoplasm. The protein localises to the cell projection. Functionally, regulator of different signaling pathways. Regulates EPHA8 receptor tyrosine kinase signaling to control cell migration and neurite retraction. This chain is Ankyrin repeat and SAM domain-containing protein 1A (ANKS1A), found in Homo sapiens (Human).